The primary structure comprises 546 residues: MSSLFFTHFALKTIGTLGGGLSDFPWLSISILFPIASAFLIPFFPDKGEGKEVRWFALSVALITFLVTVGAYINGFDINNENVQLKESISWLPKLGLTWSVGADGISMPLILLTSFITALAVLAAWPVKFKPKLFFFLILIMDGGQIAVFAVQDMLLFFLTWELELLPVYLLLAIWGGKNRQYAATKFIIYTAGSSIFILLAALAMGFYGTEVPNFEFAHLANQNFSQNFQILCYIGLLIAFGVKLPIVPLHTWLPDAHGEATAPVHMLLAGILLKMGGYALLRFNAQLLPVAHAQFAPLLIVLGVVNIIYAALTSFAQRNLKRKIAYSSISHMGFVLIGIGSFSSLGTSGAMLQMVSHGLIGASLFFLVGATYDRTKTLKLDEMGGVGQKMRIMFALWTACSLASLALPGMSGFVSELMVFTGFVTDEVYTLPFRVVMASLAAVGVILTPIYLLSMLREIFFGKENPKLTEDRNLIDAEPREVYIIACLLLPIIGIGLYPRLVTESYLATISNLVDRDLNAVKSVPKTNIFAGNKKSQILKAPTI.

Transmembrane regions (helical) follow at residues 24–44 (FPWL…IPFF), 56–76 (FALS…INGF), 106–126 (ISMP…LAAW), 132–152 (PKLF…VFAV), 156–176 (LLFF…LAIW), 188–208 (FIIY…AMGF), 232–252 (ILCY…VPLH), 263–283 (TAPV…YALL), 297–317 (FAPL…LTSF), 326–346 (IAYS…SFSS), 352–372 (AMLQ…LVGA), 396–416 (FALW…SGFV), 437–457 (VVMA…LLSM), and 484–504 (VYII…PRLV).

This sequence belongs to the complex I subunit 4 family.

It localises to the cellular thylakoid membrane. The enzyme catalyses a plastoquinone + NADH + (n+1) H(+)(in) = a plastoquinol + NAD(+) + n H(+)(out). The catalysed reaction is a plastoquinone + NADPH + (n+1) H(+)(in) = a plastoquinol + NADP(+) + n H(+)(out). Functionally, NDH-1 shuttles electrons from NAD(P)H, via FMN and iron-sulfur (Fe-S) centers, to quinones in the respiratory chain. The immediate electron acceptor for the enzyme in this species is believed to be plastoquinone. Couples the redox reaction to proton translocation (for every two electrons transferred, four hydrogen ions are translocated across the cytoplasmic membrane), and thus conserves the redox energy in a proton gradient. In Prochlorococcus marinus (strain MIT 9515), this protein is NAD(P)H-quinone oxidoreductase chain 4.